A 334-amino-acid chain; its full sequence is Guanine nucleotide-binding protein subunit beta-like protein (334 aa).

WD repeat units follow at residues 14–55, 65–104, 106–145, 152–192, 215–256, and 257–294; these read GHKD…DSEF, GHSK…SILL, GHGR…VLKM, MHRG…HLQT, DESK…QSFD, and AIVP…VIAS.

The protein belongs to the WD repeat G protein beta family.

This chain is Guanine nucleotide-binding protein subunit beta-like protein, found in Encephalitozoon cuniculi (strain GB-M1) (Microsporidian parasite).